The following is a 156-amino-acid chain: Deoxyuridine 5'-triphosphate nucleotidohydrolase (156 aa).

Substrate is bound by residues arginine 76–glycine 78, asparagine 89, threonine 93–aspartate 95, and lysine 103.

It belongs to the dUTPase family. Requires Mg(2+) as cofactor.

It catalyses the reaction dUTP + H2O = dUMP + diphosphate + H(+). Its pathway is pyrimidine metabolism; dUMP biosynthesis; dUMP from dCTP (dUTP route): step 2/2. Functionally, this enzyme is involved in nucleotide metabolism: it produces dUMP, the immediate precursor of thymidine nucleotides and it decreases the intracellular concentration of dUTP so that uracil cannot be incorporated into DNA. The polypeptide is Deoxyuridine 5'-triphosphate nucleotidohydrolase (Rhizobium etli (strain ATCC 51251 / DSM 11541 / JCM 21823 / NBRC 15573 / CFN 42)).